Here is a 601-residue protein sequence, read N- to C-terminus: Membrane protein insertase YidC (601 aa).

A helical membrane pass occupies residues 10–30 (ISISLVILVLFQVIASYVLPP). The disordered stretch occupies residues 34–63 (APPHPATQTAQTQPVSGQPAPGVPAPSAVP). The span at 39 to 53 (ATQTAQTQPVSGQPA) shows a compositional bias: low complexity. Positions 54-63 (PGVPAPSAVP) are enriched in pro residues. A run of 4 helical transmembrane segments spans residues 382–404 (FGNM…FPLV), 455–475 (LPML…FISI), 510–530 (ALSP…TMWG), and 549–569 (FMPV…VLYY).

Belongs to the OXA1/ALB3/YidC family. Type 1 subfamily. Interacts with the Sec translocase complex via SecD. Specifically interacts with transmembrane segments of nascent integral membrane proteins during membrane integration.

It is found in the cell inner membrane. Functionally, required for the insertion and/or proper folding and/or complex formation of integral membrane proteins into the membrane. Involved in integration of membrane proteins that insert both dependently and independently of the Sec translocase complex, as well as at least some lipoproteins. Aids folding of multispanning membrane proteins. In Acidiphilium cryptum (strain JF-5), this protein is Membrane protein insertase YidC.